Here is a 67-residue protein sequence, read N- to C-terminus: Bowman-Birk type proteinase inhibitor A6 (67 aa).

Disulfide bonds link Cys-9/Cys-66, Cys-10/Cys-29, Cys-13/Cys-62, Cys-16/Cys-27, Cys-36/Cys-43, and Cys-40/Cys-54.

It belongs to the Bowman-Birk serine protease inhibitor family. As to expression, expressed in bulb (at protein level).

Its function is as follows. Serine protease inhibitor. Strongly inhibits trypsin (Ki = 4 nM) and elastase (Ki = 4.8 nM). Also inhibits chymotrypsin with a Ki of 22 nM. Does not inhibit bacterial subtilisin. In Hyacinthus orientalis (Common hyacinth), this protein is Bowman-Birk type proteinase inhibitor A6.